The chain runs to 650 residues: MFPNKKTPLLDKIKTPAELRQLDRNSLRQLADELRKETISAVGVTGGHLGSGLGVIELTVALHYVFNTPKDALVWDVGHQTYPHKILTGRRDRIRTLRQRDGLSGFTQRAESEYDAFGAAHSSTSISAALGFAMASKLSDSDDKAVAIIGDGSMTAGMAYEAMNNAKAAGKRLIVILNDNEMSISPPVGALSSYLSRLISSRPFMNLRDIMRGVVNRMPKGLATAARKADEYARGMATGGTFFEELGFYYVGPVDGHNLDQLIPVLENVRDAKDGPILVHVVTRKGQGYAPAEAAKDKYHAVQRLDVVSGKQAKAPPGPPSYTSVFSEQLIKEAKQDDKIVTITAAMPTGTGLDRFQQYFPERMFDVGIAEQHAVTFAAGLAAAGYKPFCCLYSTFLQRGYDQLVHDVAIQNLPVRFAVDRAGLVGADGATHAGSFDLAFMVNLPNMVVMAPSDERELANMVHSMAHYDQGPISVRYPRGNGVGVSLEGEKEILPIGKGRLIRRGKKVAILSLGTRLEESLKAADRLDAQGLSTSVADMRFAKPLDEALTRQLLKSHQVIITIEEGALGGFATQVLTMASDEGLMDDGLKIRTLRLPDRFQPQDKQERQYAEAGLDADGIVAAVTAALQRNSKPVEVVELTTKVTEDMTL.

Thiamine diphosphate is bound by residues His79 and 120-122 (AHS). Asp151 lines the Mg(2+) pocket. Thiamine diphosphate is bound by residues 152 to 153 (GS), Asn180, Tyr289, and Glu371. Asn180 contributes to the Mg(2+) binding site.

Belongs to the transketolase family. DXPS subfamily. In terms of assembly, homodimer. The cofactor is Mg(2+). Thiamine diphosphate is required as a cofactor.

The enzyme catalyses D-glyceraldehyde 3-phosphate + pyruvate + H(+) = 1-deoxy-D-xylulose 5-phosphate + CO2. It functions in the pathway metabolic intermediate biosynthesis; 1-deoxy-D-xylulose 5-phosphate biosynthesis; 1-deoxy-D-xylulose 5-phosphate from D-glyceraldehyde 3-phosphate and pyruvate: step 1/1. Catalyzes the acyloin condensation reaction between C atoms 2 and 3 of pyruvate and glyceraldehyde 3-phosphate to yield 1-deoxy-D-xylulose-5-phosphate (DXP). This is 1-deoxy-D-xylulose-5-phosphate synthase 2 from Zymomonas mobilis subsp. mobilis (strain ATCC 31821 / ZM4 / CP4).